We begin with the raw amino-acid sequence, 183 residues long: Translocon-associated protein subunit beta (183 aa).

The first 17 residues, Met-1–Ala-17, serve as a signal peptide directing secretion. Over Glu-18–His-146 the chain is Lumenal. A glycan (N-linked (GlcNAc...) (high mannose) asparagine) is linked at Asn-88. N-linked (GlcNAc...) asparagine glycosylation is present at Asn-104. Residues Phe-147–Leu-167 traverse the membrane as a helical segment. Over Trp-168 to Asn-183 the chain is Cytoplasmic.

It belongs to the TRAP-beta family. Heterotetramer of TRAP-alpha, TRAP-beta, TRAP-delta and TRAP-gamma. Interacts with STING1.

It localises to the endoplasmic reticulum membrane. Its function is as follows. TRAP proteins are part of a complex whose function is to bind calcium to the ER membrane and thereby regulate the retention of ER resident proteins. The sequence is that of Translocon-associated protein subunit beta (Ssr2) from Mus musculus (Mouse).